The following is a 437-amino-acid chain: Vacuolar protein sorting-associated protein 4A (437 aa).

Positions 1-84 (MTTSTLQKAI…RSKEKHGKKP (84 aa)) are interaction with CHMP1B. The 79-residue stretch at 2-80 (TTSTLQKAID…KDYLRSKEKH (79 aa)) folds into the MIT domain. At K8 the chain carries N6-acetyllysine. Residues 75–106 (RSKEKHGKKPVKENQSEGKGSDSDSEGDNPEK) are disordered. A compositionally biased stretch (basic and acidic residues) spans 84-96 (PVKENQSEGKGSD). Phosphoserine occurs at positions 95 and 97. Residue 167–174 (GPPGTGKS) participates in ATP binding.

It belongs to the AAA ATPase family. As to quaternary structure, proposed to be monomeric or homodimeric in nucleotide-free form and to oligomerize upon binding to ATP to form two stacked hexameric or heptameric rings with a central pore through which ESCRT-III substrates are translocated in an ATP-dependent manner. Interacts with CHMP1A, CHMP1B, CHMP2A, CHMP2B, CHMP3, CHMP4A, CHMP4B, CHMP4C and CHMP6. Interacts with VPS4B; the interaction suggests a heteromeric assembly with VPS4B. Interacts with SPAST. Interacts with IST1. Interacts with ZFYVE19/ANCHR; leading to retain it at midbody. In terms of tissue distribution, ubiquitously expressed.

It is found in the late endosome membrane. The protein localises to the midbody. Its subcellular location is the cytoplasm. The protein resides in the cytoskeleton. It localises to the spindle. It carries out the reaction ATP + H2O = ADP + phosphate + H(+). Involved in late steps of the endosomal multivesicular bodies (MVB) pathway. Recognizes membrane-associated ESCRT-III assemblies and catalyzes their disassembly, possibly in combination with membrane fission. Redistributes the ESCRT-III components to the cytoplasm for further rounds of MVB sorting. MVBs contain intraluminal vesicles (ILVs) that are generated by invagination and scission from the limiting membrane of the endosome and mostly are delivered to lysosomes enabling degradation of membrane proteins, such as stimulated growth factor receptors, lysosomal enzymes and lipids. It is required for proper accomplishment of various processes including the regulation of endosome size, primary cilium organization, mitotic spindle organization, chromosome segregation, and nuclear envelope sealing and spindle disassembly during anaphase. Involved in cytokinesis: retained at the midbody by ZFYVE19/ANCHR and CHMP4C until abscission checkpoint signaling is terminated at late cytokinesis. It is then released following dephosphorylation of CHMP4C, leading to abscission. VPS4A/B are required for the exosomal release of SDCBP, CD63 and syndecan. Critical for normal erythroblast cytokinesis and correct erythropoiesis. In terms of biological role, (Microbial infection) In conjunction with the ESCRT machinery also appears to function in topologically equivalent membrane fission events, such as the terminal stages of cytokinesis and enveloped virus budding (HIV-1 and other lentiviruses). This Homo sapiens (Human) protein is Vacuolar protein sorting-associated protein 4A.